The primary structure comprises 89 residues: Small ribosomal subunit protein uS15 (89 aa).

It belongs to the universal ribosomal protein uS15 family. Part of the 30S ribosomal subunit. Forms a bridge to the 50S subunit in the 70S ribosome, contacting the 23S rRNA.

Functionally, one of the primary rRNA binding proteins, it binds directly to 16S rRNA where it helps nucleate assembly of the platform of the 30S subunit by binding and bridging several RNA helices of the 16S rRNA. Forms an intersubunit bridge (bridge B4) with the 23S rRNA of the 50S subunit in the ribosome. This chain is Small ribosomal subunit protein uS15, found in Shewanella amazonensis (strain ATCC BAA-1098 / SB2B).